Consider the following 245-residue polypeptide: 3-deoxy-manno-octulosonate cytidylyltransferase (245 aa).

This sequence belongs to the KdsB family.

Its subcellular location is the cytoplasm. It carries out the reaction 3-deoxy-alpha-D-manno-oct-2-ulosonate + CTP = CMP-3-deoxy-beta-D-manno-octulosonate + diphosphate. The protein operates within nucleotide-sugar biosynthesis; CMP-3-deoxy-D-manno-octulosonate biosynthesis; CMP-3-deoxy-D-manno-octulosonate from 3-deoxy-D-manno-octulosonate and CTP: step 1/1. It functions in the pathway bacterial outer membrane biogenesis; lipopolysaccharide biosynthesis. Functionally, activates KDO (a required 8-carbon sugar) for incorporation into bacterial lipopolysaccharide in Gram-negative bacteria. This is 3-deoxy-manno-octulosonate cytidylyltransferase from Rhodopseudomonas palustris (strain ATCC BAA-98 / CGA009).